A 353-amino-acid polypeptide reads, in one-letter code: Photosystem II D2 protein (353 aa).

At T2 the chain carries N-acetylthreonine. Phosphothreonine is present on T2. A helical membrane pass occupies residues 41–61; that stretch reads CAYFAVGGWFTGTTFVTSWYT. Position 118 (H118) interacts with chlorophyll a. A helical membrane pass occupies residues 125–141; sequence GFMLRQFELARSVQLRP. Q130 and N143 together coordinate pheophytin a. Residues 153 to 166 traverse the membrane as a helical segment; sequence VFVSVFLIYPLGQS. A chlorophyll a-binding site is contributed by H198. The helical transmembrane segment at 208-228 threads the bilayer; the sequence is AALLCAIHGATVENTLFEDGD. The a plastoquinone site is built by H215 and F262. Position 215 (H215) interacts with Fe cation. H269 provides a ligand contact to Fe cation. Residues 279-295 form a helical membrane-spanning segment; the sequence is GLWMSALGVVGLALNLR.

It belongs to the reaction center PufL/M/PsbA/D family. As to quaternary structure, PSII is composed of 1 copy each of membrane proteins PsbA, PsbB, PsbC, PsbD, PsbE, PsbF, PsbH, PsbI, PsbJ, PsbK, PsbL, PsbM, PsbT, PsbX, PsbY, PsbZ, Psb30/Ycf12, at least 3 peripheral proteins of the oxygen-evolving complex and a large number of cofactors. It forms dimeric complexes. The cofactor is The D1/D2 heterodimer binds P680, chlorophylls that are the primary electron donor of PSII, and subsequent electron acceptors. It shares a non-heme iron and each subunit binds pheophytin, quinone, additional chlorophylls, carotenoids and lipids. There is also a Cl(-1) ion associated with D1 and D2, which is required for oxygen evolution. The PSII complex binds additional chlorophylls, carotenoids and specific lipids..

It is found in the plastid. The protein localises to the chloroplast thylakoid membrane. The catalysed reaction is 2 a plastoquinone + 4 hnu + 2 H2O = 2 a plastoquinol + O2. Functionally, photosystem II (PSII) is a light-driven water:plastoquinone oxidoreductase that uses light energy to abstract electrons from H(2)O, generating O(2) and a proton gradient subsequently used for ATP formation. It consists of a core antenna complex that captures photons, and an electron transfer chain that converts photonic excitation into a charge separation. The D1/D2 (PsbA/PsbD) reaction center heterodimer binds P680, the primary electron donor of PSII as well as several subsequent electron acceptors. D2 is needed for assembly of a stable PSII complex. This Atropa belladonna (Belladonna) protein is Photosystem II D2 protein.